Consider the following 116-residue polypeptide: Somatostatin (116 aa).

An N-terminal signal peptide occupies residues methionine 1–glycine 24. Residues alanine 25–arginine 88 constitute a propeptide that is removed on maturation. Alanine 43 carries the alanine amide modification. The interval glutamine 62–methionine 82 is disordered. Cysteine 105 and cysteine 116 are oxidised to a cystine.

The protein belongs to the somatostatin family. C-terminal amidation of the neuronostatin peptide is required for its biological activity, including for the regulation of mean arterial pressure.

The protein localises to the secreted. Its function is as follows. Inhibits the secretion of pituitary hormones, including that of growth hormone/somatotropin (GH1), PRL, ACTH, luteinizing hormone (LH) and TSH. Also impairs ghrelin- and GnRH-stimulated secretion of GH1 and LH; the inhibition of ghrelin-stimulated secretion of GH1 can be further increased by neuronostatin. May enhance low-glucose-induced glucagon release by pancreatic alpha cells. This effect may be mediated by binding to GPR107 and PKA activation. May regulate cardiac contractile function. May compromise cardiomyocyte viability. In the central nervous system, may impair memory retention and may affect hippocampal excitability. May also have anxiolytic and anorexigenic effects. May play a role in arterial pressure regulation. May inhibit basal, but not ghrelin- or GnRH-stimulated secretion of GH1 or LH, but does not affect the release of other pituitary hormones, including PRL, ACTH, FSH or TSH. Potentiates inhibitory action of somatostatin on ghrelin-stimulated secretion of GH1, but not that on GnRH-stimulated secretion of LH. This chain is Somatostatin (SST), found in Homo sapiens (Human).